The chain runs to 425 residues: Serine--tRNA ligase (425 aa).

231-233 (TAE) contacts L-serine. ATP-binding positions include 262 to 264 (RTE) and V278. E285 contributes to the L-serine binding site. 349-352 (EVTS) serves as a coordination point for ATP. An L-serine-binding site is contributed by T384.

This sequence belongs to the class-II aminoacyl-tRNA synthetase family. Type-1 seryl-tRNA synthetase subfamily. Homodimer. The tRNA molecule binds across the dimer.

The protein resides in the cytoplasm. The catalysed reaction is tRNA(Ser) + L-serine + ATP = L-seryl-tRNA(Ser) + AMP + diphosphate + H(+). It carries out the reaction tRNA(Sec) + L-serine + ATP = L-seryl-tRNA(Sec) + AMP + diphosphate + H(+). It participates in aminoacyl-tRNA biosynthesis; selenocysteinyl-tRNA(Sec) biosynthesis; L-seryl-tRNA(Sec) from L-serine and tRNA(Sec): step 1/1. Functionally, catalyzes the attachment of serine to tRNA(Ser). Is also able to aminoacylate tRNA(Sec) with serine, to form the misacylated tRNA L-seryl-tRNA(Sec), which will be further converted into selenocysteinyl-tRNA(Sec). The chain is Serine--tRNA ligase from Dictyoglomus thermophilum (strain ATCC 35947 / DSM 3960 / H-6-12).